The primary structure comprises 582 residues: Proline--tRNA ligase (582 aa).

Belongs to the class-II aminoacyl-tRNA synthetase family. ProS type 1 subfamily. In terms of assembly, homodimer.

It is found in the cytoplasm. It carries out the reaction tRNA(Pro) + L-proline + ATP = L-prolyl-tRNA(Pro) + AMP + diphosphate. Its function is as follows. Catalyzes the attachment of proline to tRNA(Pro) in a two-step reaction: proline is first activated by ATP to form Pro-AMP and then transferred to the acceptor end of tRNA(Pro). As ProRS can inadvertently accommodate and process non-cognate amino acids such as alanine and cysteine, to avoid such errors it has two additional distinct editing activities against alanine. One activity is designated as 'pretransfer' editing and involves the tRNA(Pro)-independent hydrolysis of activated Ala-AMP. The other activity is designated 'posttransfer' editing and involves deacylation of mischarged Ala-tRNA(Pro). The misacylated Cys-tRNA(Pro) is not edited by ProRS. In Mycolicibacterium paratuberculosis (strain ATCC BAA-968 / K-10) (Mycobacterium paratuberculosis), this protein is Proline--tRNA ligase.